The sequence spans 468 residues: Putative ankyrin repeat protein R580 (468 aa).

ANK repeat units follow at residues 12–41 (DYFDPINLSIKDGGEKTIDIIDCERYTLID), 189–218 (VINKSLNFASKSNMSELAIFLVDNGAEINC), 249–278 (CHFDLVEAVFNSGSLEMIETFIDFGMKINS), 336–365 (SFDNALVSTINAGKFKNAEYLLFSGANINF), 367–393 (NMPTNCMFKINFQTIKFLIDNNFDLEI), and 394–423 (HGTLILNKSLLNGYYDCANILIENGVKFSL).

The chain is Putative ankyrin repeat protein R580 from Acanthamoeba polyphaga (Amoeba).